We begin with the raw amino-acid sequence, 556 residues long: Glucomannan 4-beta-mannosyltransferase 7 (556 aa).

A helical membrane pass occupies residues 58-78 (VVVPVFKFLVLLCLVMSVMFF). Asp-158 is an active-site residue. Substrate-binding residues include Asp-217 and Asp-219. Asp-311 is an active-site residue. The next 4 helical transmembrane spans lie at 390–410 (IVAH…TVLF), 426–448 (LITL…WVLF), 502–522 (LLEL…IVYG), and 526–546 (LYVY…GFVG).

It belongs to the glycosyltransferase 2 family. Plant cellulose synthase-like A subfamily. In terms of tissue distribution, ubiquitous.

Its subcellular location is the golgi apparatus membrane. It carries out the reaction GDP-mannose + (glucomannan)n = GDP + (glucomannan)n+1.. Probable mannan synthase which consists of a 4-beta-mannosyltransferase activity on mannan using GDP-mannose. The beta-1,4-mannan product is the backbone for galactomannan synthesis by galactomannan galactosyltransferase. Galactomannan is a noncellulosic polysaccharides of plant cell wall. Required for synthesis of a cell wall polysaccharide essential for pollen tube growth, for cell wall structure, or for signaling during plant embryo development. The polypeptide is Glucomannan 4-beta-mannosyltransferase 7 (Arabidopsis thaliana (Mouse-ear cress)).